The sequence spans 118 residues: Non-specific lipid-transfer protein 1 (118 aa).

The N-terminal stretch at 1–20 is a signal peptide; the sequence is MARLAVAIAVVAAVVVVLAA. 4 disulfides stabilise this stretch: cysteine 29–cysteine 77, cysteine 39–cysteine 54, cysteine 55–cysteine 100, and cysteine 75–cysteine 114.

This sequence belongs to the plant LTP family.

Its function is as follows. Plant non-specific lipid-transfer proteins transfer phospholipids as well as galactolipids across membranes. May play a role in wax or cutin deposition in the cell walls of expanding epidermal cells and certain secretory tissues. The sequence is that of Non-specific lipid-transfer protein 1 (LTP1) from Sorghum bicolor (Sorghum).